A 481-amino-acid polypeptide reads, in one-letter code: Bifunctional protein HldE (481 aa).

The interval 1 to 318 (MKVTLPDFRR…ENAIRGRAET (318 aa)) is ribokinase. ATP is bound at residue 195 to 198 (NLSE). Asp264 is an active-site residue. The cytidylyltransferase stretch occupies residues 344 to 481 (MTNGIFDILH…KRRAGQRTVV (138 aa)).

It in the N-terminal section; belongs to the carbohydrate kinase PfkB family. The protein in the C-terminal section; belongs to the cytidylyltransferase family. As to quaternary structure, homodimer.

It catalyses the reaction D-glycero-beta-D-manno-heptose 7-phosphate + ATP = D-glycero-beta-D-manno-heptose 1,7-bisphosphate + ADP + H(+). It carries out the reaction D-glycero-beta-D-manno-heptose 1-phosphate + ATP + H(+) = ADP-D-glycero-beta-D-manno-heptose + diphosphate. It functions in the pathway nucleotide-sugar biosynthesis; ADP-L-glycero-beta-D-manno-heptose biosynthesis; ADP-L-glycero-beta-D-manno-heptose from D-glycero-beta-D-manno-heptose 7-phosphate: step 1/4. Its pathway is nucleotide-sugar biosynthesis; ADP-L-glycero-beta-D-manno-heptose biosynthesis; ADP-L-glycero-beta-D-manno-heptose from D-glycero-beta-D-manno-heptose 7-phosphate: step 3/4. Functionally, catalyzes the phosphorylation of D-glycero-D-manno-heptose 7-phosphate at the C-1 position to selectively form D-glycero-beta-D-manno-heptose-1,7-bisphosphate. In terms of biological role, catalyzes the ADP transfer from ATP to D-glycero-beta-D-manno-heptose 1-phosphate, yielding ADP-D-glycero-beta-D-manno-heptose. The chain is Bifunctional protein HldE from Sodalis glossinidius (strain morsitans).